The sequence spans 421 residues: UDP-N-acetylglucosamine 1-carboxyvinyltransferase 2 (421 aa).

22-23 (KN) is a binding site for phosphoenolpyruvate. Residue Arg95 coordinates UDP-N-acetyl-alpha-D-glucosamine. The Proton donor role is filled by Cys119. Cys119 is modified (2-(S-cysteinyl)pyruvic acid O-phosphothioketal). UDP-N-acetyl-alpha-D-glucosamine contacts are provided by residues 124-128 (RPIEQ), Asp308, and Val330.

Belongs to the EPSP synthase family. MurA subfamily.

It is found in the cytoplasm. The enzyme catalyses phosphoenolpyruvate + UDP-N-acetyl-alpha-D-glucosamine = UDP-N-acetyl-3-O-(1-carboxyvinyl)-alpha-D-glucosamine + phosphate. The protein operates within cell wall biogenesis; peptidoglycan biosynthesis. In terms of biological role, cell wall formation. Adds enolpyruvyl to UDP-N-acetylglucosamine. This is UDP-N-acetylglucosamine 1-carboxyvinyltransferase 2 from Staphylococcus saprophyticus subsp. saprophyticus (strain ATCC 15305 / DSM 20229 / NCIMB 8711 / NCTC 7292 / S-41).